A 69-amino-acid chain; its full sequence is Putative membrane protein insertion efficiency factor (69 aa).

This sequence belongs to the UPF0161 family.

It localises to the cell membrane. Could be involved in insertion of integral membrane proteins into the membrane. The polypeptide is Putative membrane protein insertion efficiency factor (Thermomicrobium roseum (strain ATCC 27502 / DSM 5159 / P-2)).